A 202-amino-acid chain; its full sequence is MRVVLASRNEAKLTELRRILAASGLSVELVALPDGEEVAETGTTFAENALIKARAAADQTGLPAVADDSGLAVDELSGMPGVRSARWSGRRDGTRVERDEANNALLLAQLDDVPPERRGAAFVCAAALVTPAGVERVTHGELRGVLLTEPRGQAGFGYDPLFLADGQTRTNAELTAAEKDAISHRGLAFRDLATLLREVLTS.

Substrate is bound at residue 7 to 12 (SRNEAK). The Proton acceptor role is filled by D68. D68 serves as a coordination point for Mg(2+). Residues S69, 156–159 (FGYD), K179, and 184–185 (HR) contribute to the substrate site.

The protein belongs to the HAM1 NTPase family. Homodimer. Mg(2+) serves as cofactor.

The catalysed reaction is XTP + H2O = XMP + diphosphate + H(+). The enzyme catalyses dITP + H2O = dIMP + diphosphate + H(+). It carries out the reaction ITP + H2O = IMP + diphosphate + H(+). Functionally, pyrophosphatase that catalyzes the hydrolysis of nucleoside triphosphates to their monophosphate derivatives, with a high preference for the non-canonical purine nucleotides XTP (xanthosine triphosphate), dITP (deoxyinosine triphosphate) and ITP. Seems to function as a house-cleaning enzyme that removes non-canonical purine nucleotides from the nucleotide pool, thus preventing their incorporation into DNA/RNA and avoiding chromosomal lesions. This Frankia alni (strain DSM 45986 / CECT 9034 / ACN14a) protein is dITP/XTP pyrophosphatase.